The following is a 462-amino-acid chain: Probable alcohol acetyltransferase crmB (462 aa).

It belongs to the alcohol acetyltransferase FCK4 family.

It functions in the pathway secondary metabolite biosynthesis. Its function is as follows. Probable alcohol acetyltransferase; part of the crm gene cluster that mediates the biosynthesis of a yet unidentified copper-responsive metabolite. In contrast to crmA, is not involved in the biosynthesis of fumivalines or fumicicolins. The sequence is that of Probable alcohol acetyltransferase crmB from Aspergillus fumigatus (strain ATCC MYA-4609 / CBS 101355 / FGSC A1100 / Af293) (Neosartorya fumigata).